The following is a 137-amino-acid chain: MRTLWIVAVLLVGVEGSMYELGKMILLETGKNAATSYIAYGCNCGVGRRGQPLDATDRCCYVHKCCYKKLTGCNPLTDRYSHSLKNKTIVCGENKPCLKEMCECDKALAICLGKNVNTYNKNYKITMKMFCKKPDAC.

The first 16 residues, 1 to 16 (MRTLWIVAVLLVGVEG), serve as a signal peptide directing secretion. Disulfide bonds link Cys-42/Cys-131, Cys-44/Cys-60, Cys-59/Cys-111, Cys-65/Cys-137, Cys-66/Cys-104, Cys-73/Cys-97, and Cys-91/Cys-102. An important for membrane-damaging activities in eukaryotes and bacteria; heparin-binding region spans residues 121–133 (KNYKITMKMFCKK).

The protein belongs to the phospholipase A2 family. Group II subfamily. K49 sub-subfamily. In terms of assembly, homodimer; non-covalently linked. Expressed by the venom gland.

It is found in the secreted. Functionally, snake venom phospholipase A2 that lacks enzymatic activity. Is myotoxic, and displays edema-inducing activities. A model of myotoxic mechanism has been proposed: an apo Lys49-PLA2 is activated by the entrance of a hydrophobic molecule (e.g. fatty acid) at the hydrophobic channel of the protein leading to a reorientation of a monomer. This reorientation causes a transition between 'inactive' to 'active' states, causing alignment of C-terminal and membrane-docking sites (MDoS) side-by-side and putting the membrane-disruption sites (MDiS) in the same plane, exposed to solvent and in a symmetric position for both monomers. The MDoS region stabilizes the toxin on membrane by the interaction of charged residues with phospholipid head groups. Subsequently, the MDiS region destabilizes the membrane with penetration of hydrophobic residues. This insertion causes a disorganization of the membrane, allowing an uncontrolled influx of ions (i.e. calcium and sodium), and eventually triggering irreversible intracellular alterations and cell death. This chain is Basic phospholipase A2 homolog Bsc-K49, found in Bothriechis schlegelii (Eyelash palm pitviper).